The following is a 920-amino-acid chain: Puromycin-sensitive aminopeptidase (920 aa).

Residues E181 and 317-321 (GAMEN) contribute to the substrate site. H353 is a binding site for Zn(2+). The Proton acceptor role is filled by E354. Residues H357 and E376 each coordinate Zn(2+). Y465 bears the 3'-nitrotyrosine mark. A Nuclear localization signal motif is present at residues 727-731 (RRRFK).

Belongs to the peptidase M1 family. In terms of assembly, monomer. It depends on Zn(2+) as a cofactor. As to expression, widely expressed. Highest expression in brain, particularly the striatum and hippocampus. Expressed in Sertoli cells.

Its subcellular location is the cytoplasm. It is found in the cytosol. It localises to the nucleus. The enzyme catalyses Release of an N-terminal amino acid, preferentially alanine, from a wide range of peptides, amides and arylamides.. With respect to regulation, strongly inhibited by bestatin, leuhistin, actinonin, amastatin, 1,10-phenanthroline, DFP, PCMBS, Zn(2+), Cd(2+), Co(2+), Cu(2+), Hg(2+), EDTA and puromycin. Not inhibited by PMSF, and only slightly inhibited by leupeptin and aprotinin. Activity is increased by Mg(2+) and Ca(2+). Its function is as follows. Aminopeptidase with broad substrate specificity for several peptides. Involved in proteolytic events essential for cell growth and viability. May act as regulator of neuropeptide activity. Plays a role in the antigen-processing pathway for MHC class I molecules. Involved in the N-terminal trimming of cytotoxic T-cell epitope precursors. Digests the poly-Q peptides found in many cellular proteins. This is Puromycin-sensitive aminopeptidase (Npepps) from Mus musculus (Mouse).